The sequence spans 258 residues: MHRYKITFAYDGSNFAGFQIQPGERTVQQVLERAVNKIAKKPQPPLMVFGSGRTDAGVHALGQVAHFDLPYQIPGPSLVRALNSSLPLDVLVKEATEVAPDFHARFDAHHKRYRYRVVGGEFTNPFKRNYTGHYKYPVDVERMQTAAQDFVGEHDFTSFVASGSQATSNVRRIDEVTVVRDEENDEVVFDFVGNGFLYNQVRIMVAFLLEIGNGRRPVDDVMRVMKAKNRDLARGTAPASGLYLVEVTYDSPANSQND.

Residue aspartate 55 is the Nucleophile of the active site. A substrate-binding site is contributed by tyrosine 113.

Belongs to the tRNA pseudouridine synthase TruA family. As to quaternary structure, homodimer.

It carries out the reaction uridine(38/39/40) in tRNA = pseudouridine(38/39/40) in tRNA. In terms of biological role, formation of pseudouridine at positions 38, 39 and 40 in the anticodon stem and loop of transfer RNAs. The chain is tRNA pseudouridine synthase A from Limosilactobacillus fermentum (strain NBRC 3956 / LMG 18251) (Lactobacillus fermentum).